Consider the following 397-residue polypeptide: MGKAKFERTKPHVNIGTIGHVDHGKTTLTAAISKVLADKYPSATNVQRDFASIDSAPEERQRGITINISHVEYETPKRHYAHVDAPGHADYIKNMITGAAQMDGAILVVAATDGPMAQTREHVLLAKQVGVPYLLVALNKSDMVDDEEILELVELEVRELLSSQDFDGDNAPVVQVSGLKALEGDEKWVEQIVKLMEAVDESIPEPVRDKDKPFLMPVEDVFTITGRGTVVTGRAERGTLAINSDVEIVGIRPTVKTTVTGIEMFHKQLDEAWAGENCGLLLRGTKREDVERGQVIVKPGSVTPHTKFEGTAYILSKEEGGRHNPFYGNYRPQFYFRTTDVTGVITLPEGAEMVMPGDTTDMKVELIQPIAMEEGLGFAIREGGRTVGAGTVTKIVK.

The region spanning 10–207 is the tr-type G domain; that stretch reads KPHVNIGTIG…AVDESIPEPV (198 aa). A G1 region spans residues 19 to 26; that stretch reads GHVDHGKT. 19–26 contributes to the GTP binding site; sequence GHVDHGKT. T26 lines the Mg(2+) pocket. Positions 63-67 are G2; the sequence is GITIN. A G3 region spans residues 84–87; sequence DAPG. GTP contacts are provided by residues 84–88 and 139–142; these read DAPGH and NKSD. The G4 stretch occupies residues 139–142; that stretch reads NKSD. Positions 177–179 are G5; that stretch reads SGL.

The protein belongs to the TRAFAC class translation factor GTPase superfamily. Classic translation factor GTPase family. EF-Tu/EF-1A subfamily. In terms of assembly, monomer.

The protein localises to the cytoplasm. It catalyses the reaction GTP + H2O = GDP + phosphate + H(+). Functionally, GTP hydrolase that promotes the GTP-dependent binding of aminoacyl-tRNA to the A-site of ribosomes during protein biosynthesis. This is Elongation factor Tu from Clavibacter sepedonicus (Clavibacter michiganensis subsp. sepedonicus).